The primary structure comprises 240 residues: Phosducin-like protein 3 (240 aa).

Methionine 1 is modified (N-acetylmethionine). Residues 27-181 (KELEEEEAEK…EGDIKAQFIG (155 aa)) form the Phosducin domain. Phosphoserine occurs at positions 44, 65, 235, and 237. The interval 92-240 (FGEVLEISGK…MRRDSDSEDD (149 aa)) is thioredoxin fold.

This sequence belongs to the phosducin family. In terms of assembly, interacts (via thioredoxin fold region) with KDR/VEGFR2 (via juxtamembrane domain). Forms ternary complexes with the chaperonin CCT complex and actin substrate, leading to inhibition of actin folding. Interacts with XIAP (via BIR 3 and RING domain). Interacts with HSP90AA1 and HSP90AB1. In terms of processing, N-terminal methionine acetylation destabilizes the protein. Expressed in blood vessels (at protein level).

It is found in the cytoplasm. The protein localises to the perinuclear region. Its subcellular location is the endoplasmic reticulum. Its function is as follows. Acts as a chaperone for the angiogenic VEGF receptor KDR/VEGFR2, increasing its abundance by inhibiting its ubiquitination and degradation. Inhibits the folding activity of the chaperonin-containing T-complex (CCT) which leads to inhibition of cytoskeletal actin folding. Acts as a chaperone during heat shock alongside HSP90 and HSP40/70 chaperone complexes. Modulates the activation of caspases during apoptosis. The sequence is that of Phosducin-like protein 3 (Pdcl3) from Mus musculus (Mouse).